The primary structure comprises 88 residues: MKEGIHPDYREVLFIDVSNDFKFVTRSTIQTRETAEFEGKTYPLAKIEVSSESHPFYTGQQKIMDTAGRVEKFRNKFGSRATGKVAAK.

Belongs to the bacterial ribosomal protein bL31 family. Type B subfamily. In terms of assembly, part of the 50S ribosomal subunit.

In Paraburkholderia xenovorans (strain LB400), this protein is Large ribosomal subunit protein bL31B.